The primary structure comprises 144 residues: Ribosomal RNA large subunit methyltransferase H (144 aa).

S-adenosyl-L-methionine-binding positions include Leu63, Gly92, and 111–116 (LSPMTF).

The protein belongs to the RNA methyltransferase RlmH family. Homodimer.

The protein localises to the cytoplasm. The catalysed reaction is pseudouridine(1915) in 23S rRNA + S-adenosyl-L-methionine = N(3)-methylpseudouridine(1915) in 23S rRNA + S-adenosyl-L-homocysteine + H(+). Functionally, specifically methylates the pseudouridine at position 1915 (m3Psi1915) in 23S rRNA. The polypeptide is Ribosomal RNA large subunit methyltransferase H (Synechococcus sp. (strain CC9605)).